The sequence spans 929 residues: Bifunctional glutamine synthetase adenylyltransferase/adenylyl-removing enzyme (929 aa).

The tract at residues 1 to 423 (MSTPIDSSRA…RHFEQIFAAR (423 aa)) is adenylyl removase. The adenylyl transferase stretch occupies residues 433-929 (ARIRPEQSGD…FQLWEDIFGT (497 aa)).

It belongs to the GlnE family. Mg(2+) serves as cofactor.

The enzyme catalyses [glutamine synthetase]-O(4)-(5'-adenylyl)-L-tyrosine + phosphate = [glutamine synthetase]-L-tyrosine + ADP. It carries out the reaction [glutamine synthetase]-L-tyrosine + ATP = [glutamine synthetase]-O(4)-(5'-adenylyl)-L-tyrosine + diphosphate. Its function is as follows. Involved in the regulation of glutamine synthetase GlnA, a key enzyme in the process to assimilate ammonia. When cellular nitrogen levels are high, the C-terminal adenylyl transferase (AT) inactivates GlnA by covalent transfer of an adenylyl group from ATP to specific tyrosine residue of GlnA, thus reducing its activity. Conversely, when nitrogen levels are low, the N-terminal adenylyl removase (AR) activates GlnA by removing the adenylyl group by phosphorolysis, increasing its activity. The regulatory region of GlnE binds the signal transduction protein PII (GlnB) which indicates the nitrogen status of the cell. The polypeptide is Bifunctional glutamine synthetase adenylyltransferase/adenylyl-removing enzyme (Nitrosomonas europaea (strain ATCC 19718 / CIP 103999 / KCTC 2705 / NBRC 14298)).